Consider the following 103-residue polypeptide: Large ribosomal subunit protein bL21 (103 aa).

This sequence belongs to the bacterial ribosomal protein bL21 family. In terms of assembly, part of the 50S ribosomal subunit. Contacts protein L20.

Functionally, this protein binds to 23S rRNA in the presence of protein L20. This chain is Large ribosomal subunit protein bL21, found in Shewanella sediminis (strain HAW-EB3).